The following is a 125-amino-acid chain: Small ribosomal subunit protein eS25 (125 aa).

A compositionally biased stretch (basic and acidic residues) spans 1–23 (MPPKDDKKKKDAGKSAKKDKDPV). The interval 1 to 38 (MPPKDDKKKKDAGKSAKKDKDPVNKSGGKAKKKKWSKG) is disordered. The segment covering 28–38 (GKAKKKKWSKG) has biased composition (basic residues). Lys-43 is modified (N6-acetyllysine). Lys-52 is subject to N6-acetyllysine; alternate. An N6-succinyllysine; alternate modification is found at Lys-52. Residues Lys-60 and Lys-66 each carry the N6-acetyllysine modification. Lys-94 is subject to N6-acetyllysine; alternate. Lys-94 carries the post-translational modification N6-succinyllysine; alternate.

It belongs to the eukaryotic ribosomal protein eS25 family. Component of the small ribosomal subunit.

It localises to the cytoplasm. Component of the small ribosomal subunit. The ribosome is a large ribonucleoprotein complex responsible for the synthesis of proteins in the cell. This chain is Small ribosomal subunit protein eS25 (RPS25), found in Homo sapiens (Human).